Consider the following 423-residue polypeptide: Lipoamide acyltransferase component of branched-chain alpha-keto acid dehydrogenase complex (423 aa).

The 76-residue stretch at 3–78 (THVIKMPDIG…AVGSELIRIE (76 aa)) folds into the Lipoyl-binding domain. At Lys-44 the chain carries N6-lipoyllysine. The Peripheral subunit-binding (PSBD) domain maps to 137–174 (LASPAVRKRALDAGIELRYVHGSGPAGRILHEDLDAFM). Active-site residues include His-395 and Asp-399.

It belongs to the 2-oxoacid dehydrogenase family. Forms a 24-polypeptide structural core with octahedral symmetry. The cofactor is (R)-lipoate.

It catalyses the reaction N(6)-[(R)-dihydrolipoyl]-L-lysyl-[protein] + 2-methylpropanoyl-CoA = N(6)-[(R)-S(8)-2-methylpropanoyldihydrolipoyl]-L-lysyl-[protein] + CoA. Its function is as follows. The branched-chain alpha-keto dehydrogenase complex catalyzes the overall conversion of alpha-keto acids to acyl-CoA and CO(2). It contains multiple copies of three enzymatic components: branched-chain alpha-keto acid decarboxylase (E1), lipoamide acyltransferase (E2) and lipoamide dehydrogenase (E3). In Pseudomonas putida (Arthrobacter siderocapsulatus), this protein is Lipoamide acyltransferase component of branched-chain alpha-keto acid dehydrogenase complex (bkdB).